We begin with the raw amino-acid sequence, 377 residues long: Flagellin C (377 aa).

Coiled-coil stretches lie at residues 103–129 and 301–340; these read SNSK…IAET and VDSH…KDTD.

It belongs to the bacterial flagellin family. As to quaternary structure, heteromer of multiple flagellin subunits including FlaA, FlaB, FlaC, FlaD and possibly FlaE.

The protein resides in the secreted. The protein localises to the bacterial flagellum. In terms of biological role, flagellin is the subunit protein which polymerizes to form the filaments of bacterial flagella. FlaC is not essential for flagellar synthesis and motility. This chain is Flagellin C (flaC), found in Vibrio anguillarum (Listonella anguillarum).